The chain runs to 65 residues: MKTSCLLTILLLSFLVAVAVAEGERSARAAAISCVGSPECPPKCRAQGCKNGKCMNRKCKCYYCG.

The signal sequence occupies residues 1–21 (MKTSCLLTILLLSFLVAVAVA). Residues 22-28 (EGERSAR) constitute a propeptide that is removed on maturation. Disulfide bonds link Cys34/Cys54, Cys40/Cys59, Cys44/Cys61, and Cys49/Cys64. Cys64 carries the cysteine amide modification.

It belongs to the short scorpion toxin superfamily. Potassium channel inhibitor family. Alpha-KTx 23 subfamily. In terms of tissue distribution, expressed by the venom gland.

It is found in the secreted. Voltage-gated potassium channel inhibitor. Selectively and reversibly binds (Kd=0.77 nM) and blocks hKv1.3/KCNA3 potassium channels of human T-lymphocytes. Also shows a very weak effect on hKv1.2/KCNA2 (Kd=7.1 uM). Also reduces the fraction of CD40L expressing T cells that are stimulated by alphaCD3/alphaCD28. The chain is Toxin VmKTx1 from Vaejovis mexicanus smithi (Mexican scorpion).